We begin with the raw amino-acid sequence, 831 residues long: Leucine--tRNA ligase (831 aa).

The 'HIGH' region motif lies at 36–46 (PYPSGKLHIGH). Residues 607–611 (KMSKS) carry the 'KMSKS' region motif. K610 is an ATP binding site.

This sequence belongs to the class-I aminoacyl-tRNA synthetase family.

It is found in the cytoplasm. It carries out the reaction tRNA(Leu) + L-leucine + ATP = L-leucyl-tRNA(Leu) + AMP + diphosphate. The polypeptide is Leucine--tRNA ligase (Neorickettsia sennetsu (strain ATCC VR-367 / Miyayama) (Ehrlichia sennetsu)).